The primary structure comprises 316 residues: Probable cell division protein WhiA (316 aa).

A DNA-binding region (H-T-H motif) is located at residues T275–A309.

This sequence belongs to the WhiA family.

Involved in cell division and chromosome segregation. The chain is Probable cell division protein WhiA from Bacillus cereus (strain G9842).